The following is a 224-amino-acid chain: A-type ATP synthase subunit D (224 aa).

Over residues 200 to 209 (KKVKDKKEAQ) the composition is skewed to basic and acidic residues. Residues 200–224 (KKVKDKKEAQEEAADEAAAAESTGA) are disordered. Positions 215-224 (EAAAAESTGA) are enriched in low complexity.

The protein belongs to the V-ATPase D subunit family. Has multiple subunits with at least A(3), B(3), C, D, E, F, H, I and proteolipid K(x).

The protein resides in the cell membrane. Functionally, component of the A-type ATP synthase that produces ATP from ADP in the presence of a proton gradient across the membrane. The protein is A-type ATP synthase subunit D of Halobacterium salinarum (strain ATCC 29341 / DSM 671 / R1).